The chain runs to 87 residues: MEVIADRLDDIVKQNIADEKFVDFVIHGLEHQCPAILRPLIRLFIDILLFVIVIYIFTVRLVSRNYQMLLALVALVITLTIFYYFIL.

The next 2 helical transmembrane spans lie at 39 to 59 (PLIR…IFTV) and 67 to 87 (QMLL…YFIL).

It belongs to the orthopoxvirus OPG096 family. Interacts with OPG158.

The protein resides in the virion membrane. It localises to the host cytoplasm. It is found in the host endoplasmic reticulum membrane. Its function is as follows. Early protein involved in virion morphogenesis. Participates in the formation and elongation of crescent-shaped membrane precursors of immature virions in cytoplasmic factories. The chain is Protein OPG096 (OPG096) from Vaccinia virus (strain Copenhagen) (VACV).